The sequence spans 169 residues: Disulfide bond formation protein B 1 (169 aa).

At 1–14 (MSDDRLGLGRERRF) the chain is on the cytoplasmic side. A helical transmembrane segment spans residues 15–31 (LVLLGIICLALIGGALY). Residues 32 to 49 (MQVVLGEAPCPLCILQRY) are Periplasmic-facing. Cys41 and Cys44 are disulfide-bonded. A helical membrane pass occupies residues 50–64 (ALLLIALFAFIGAAM). Residues 65-71 (SSRRGVT) lie on the Cytoplasmic side of the membrane. The helical transmembrane segment at 72 to 89 (VMETLVVICALAGAGVAG) threads the bilayer. Over 90-144 (HHVYTQFYPSVSCGIDVLQPIVDSLPLAKIFPLGFQVDGFCSTPYPPILGLSLAQ) the chain is Periplasmic. Cys102 and Cys130 form a disulfide bridge. The chain crosses the membrane as a helical span at residues 145-163 (WALVAFVLTVILVPLGVVR). Residues 164 to 169 (NRKKTY) are Cytoplasmic-facing.

It belongs to the DsbB family.

It localises to the cell inner membrane. In terms of biological role, required for disulfide bond formation in some periplasmic proteins. Acts by oxidizing the DsbA protein. The polypeptide is Disulfide bond formation protein B 1 (Pseudomonas fluorescens (strain ATCC BAA-477 / NRRL B-23932 / Pf-5)).